We begin with the raw amino-acid sequence, 450 residues long: Transcription factor AP-2 gamma (450 aa).

Lysine 10 is covalently cross-linked (Glycyl lysine isopeptide (Lys-Gly) (interchain with G-Cter in SUMO)). 2 disordered regions span residues 13-63 and 90-126; these read EDCE…FPPP and LHQP…GLLP. A PPxY motif motif is present at residues 59–64; sequence YFPPPY. Residues 95–110 show a composition bias toward polar residues; the sequence is PTGSQQQAWPGRQSQE. At serine 252 the chain carries Phosphoserine; by PKA. An H-S-H (helix-span-helix), dimerization region spans residues 293-424; that stretch reads RRKAAHVTLL…YIKEALIVID (132 aa). The interval 431-450 is disordered; the sequence is GDQSPADSNKTLEKMEKHRK. A Phosphoserine modification is found at serine 434. Basic and acidic residues predominate over residues 440–450; the sequence is KTLEKMEKHRK.

It belongs to the AP-2 family. In terms of assembly, binds DNA as a dimer. Can form homodimers or heterodimers with other AP-2 family members. Interacts with WWOX. Interacts with UBE2I. Interacts with KCTD1; this interaction represses transcription activation. Interacts with CITED2 (via C-terminus); the interaction stimulates TFAP2B-transcriptional activity. Interacts with CITED4. Interacts with MTA1. Sumoylated on Lys-10; which inhibits transcriptional activity.

It localises to the nucleus. Functionally, sequence-specific DNA-binding transcription factor that interacts with cellular enhancer elements to regulate transcription of selected genes, and which plays a key role in early embryonic development. AP-2 factors bind to the consensus sequence 5'-GCCNNNGGC-3' and activate genes involved in a large spectrum of important biological functions. TFAP2C plays a key role in early embryonic development by regulating both inner cell mass (ICM) and trophectoderm differentiation. At the 8-cell stage, during morula development, controls expression of cell-polarity genes. Upon trophoblast commitment, binds to late trophectoderm genes in blastocysts together with CDX2, and later to extra-embryonic ectoderm genes together with SOX2. Binds to both closed and open chromatin with other transcription factors. Involved in the MTA1-mediated epigenetic regulation of ESR1 expression in breast cancer. The sequence is that of Transcription factor AP-2 gamma (TFAP2C) from Homo sapiens (Human).